Here is a 380-residue protein sequence, read N- to C-terminus: Selenoprotein P (380 aa).

The first 19 residues, Met1–Ala19, serve as a signal peptide directing secretion. Position 59 (Sec59) is a non-standard amino acid, selenocysteine. N-linked (GlcNAc...) asparagine glycosylation is found at Asn83, Asn176, and Asn195. The segment at Lys196 to Glu257 is disordered. A compositionally biased stretch (polar residues) spans Ser221–Pro237. Basic residues predominate over residues Leu241 to Gln253. Position 259 (Sec259) is a non-standard amino acid, selenocysteine. Ser264 carries the post-translational modification Phosphoserine. 4 non-standard amino acids (selenocysteine) are found at residues Sec277, Sec318, Sec330, and Sec352. The disordered stretch occupies residues Arg346–Asn380. Residues Pro348 to Met360 show a composition bias toward low complexity. The N-linked (GlcNAc...) asparagine glycan is linked to Asn365. Non-standard amino acids (selenocysteine) are located at Sec366 and Sec368. The N-linked (GlcNAc...) asparagine glycan is linked to Asn370. Non-standard amino acids (selenocysteine) are located at Sec375 and Sec377.

This sequence belongs to the selenoprotein P family. Phosphorylation sites are present in the extracellular medium. As to expression, in the kidney, expressed in the cortex with no expression observed in the medulla (at protein level). Expressed by the liver and secreted in plasma.

It is found in the secreted. Functionally, might be responsible for some of the extracellular antioxidant defense properties of selenium or might be involved in the transport of selenium. May supply selenium to tissues such as brain and testis. This chain is Selenoprotein P, found in Mus musculus (Mouse).